The chain runs to 136 residues: MARTKQTARKSTGGKAPRKQLATKAARKSAPTTGGVKKPHRYRPGTVALREIRRYQKSTELLIRKLPFQRLVREIAQDFKTDLRFQSAAIGALQEASEAYLVGLFEDTNLCAIHAKRVTIMPKDMQLARRIRGERA.

Residues 1–43 form a disordered region; sequence MARTKQTARKSTGGKAPRKQLATKAARKSAPTTGGVKKPHRYR. N6,N6,N6-trimethyllysine; alternate occurs at positions 5 and 10. N6,N6-dimethyllysine; alternate is present on residues K5 and K10. Residues K5 and K10 each carry the N6-acetyllysine; alternate modification. The residue at position 5 (K5) is an N6-methyllysine; alternate. S11 is subject to Phosphoserine. K15 and K24 each carry N6-acetyllysine. At K28 the chain carries N6,N6,N6-trimethyllysine; alternate. At K28 the chain carries N6,N6-dimethyllysine; alternate. Residue K28 is modified to N6-methyllysine; alternate. A Phosphoserine modification is found at S29. K37 carries the N6,N6,N6-trimethyllysine; alternate modification. K37 bears the N6-methyllysine; alternate mark. K80 is subject to N6-methyllysine.

Belongs to the histone H3 family. The nucleosome is a histone octamer containing two molecules each of H2A, H2B, H3 and H4 assembled in one H3-H4 heterotetramer and two H2A-H2B heterodimers. The octamer wraps approximately 147 bp of DNA. Acetylation is generally linked to gene activation. In terms of processing, methylation at Lys-5 is linked to gene activation. Methylation at Lys-10 is linked to gene repression. Highly expressed in nearly all larval and adult nuclei. Expressed only at low levels in intestine. Expressed throughout all stages of gametogenesis.

The protein resides in the nucleus. Its subcellular location is the chromosome. Variant histone H3 which replaces conventional H3 in a wide range of nucleosomes in active genes. Constitutes the predominant form of histone H3 in non-dividing cells and is incorporated into chromatin independently of DNA synthesis. Deposited at sites of nucleosomal displacement throughout transcribed genes, suggesting that it represents an epigenetic imprint of transcriptionally active chromatin. Nucleosomes wrap and compact DNA into chromatin, limiting DNA accessibility to the cellular machineries which require DNA as a template. Histones thereby play a central role in transcription regulation, DNA repair, DNA replication and chromosomal stability. DNA accessibility is regulated via a complex set of post-translational modifications of histones, also called histone code, and nucleosome remodeling. This is Histone H3.3 type 2 (his-72) from Caenorhabditis elegans.